We begin with the raw amino-acid sequence, 170 residues long: Adenine phosphoribosyltransferase (170 aa).

The protein belongs to the purine/pyrimidine phosphoribosyltransferase family. Homodimer.

The protein localises to the cytoplasm. It catalyses the reaction AMP + diphosphate = 5-phospho-alpha-D-ribose 1-diphosphate + adenine. Its pathway is purine metabolism; AMP biosynthesis via salvage pathway; AMP from adenine: step 1/1. Catalyzes a salvage reaction resulting in the formation of AMP, that is energically less costly than de novo synthesis. This is Adenine phosphoribosyltransferase from Thermosynechococcus vestitus (strain NIES-2133 / IAM M-273 / BP-1).